We begin with the raw amino-acid sequence, 216 residues long: Putative cat eye syndrome critical region protein 9 (216 aa).

A signal peptide spans Met1–Ala23. Asn148 carries an N-linked (GlcNAc...) asparagine glycan.

Ubiquitously expressed with higher expression in heart.

Its subcellular location is the secreted. This Homo sapiens (Human) protein is Putative cat eye syndrome critical region protein 9 (CECR9).